We begin with the raw amino-acid sequence, 278 residues long: Glucosamine-6-phosphate deaminase (278 aa).

Residue aspartate 72 is the Proton acceptor; for enolization step of the active site. The active-site For ring-opening step is the aspartate 141. The active-site Proton acceptor; for ring-opening step is histidine 143. Residue glutamate 148 is the For ring-opening step of the active site.

Belongs to the glucosamine/galactosamine-6-phosphate isomerase family. Homohexamer.

The protein resides in the cytoplasm. It catalyses the reaction alpha-D-glucosamine 6-phosphate + H2O = beta-D-fructose 6-phosphate + NH4(+). It participates in nucleotide-sugar biosynthesis; UDP-N-acetyl-alpha-D-glucosamine biosynthesis; alpha-D-glucosamine 6-phosphate from D-fructose 6-phosphate: step 1/1. Catalyzes the reversible conversion of alpha-D-glucosamine 6-phosphate (GlcN-6P) into beta-D-fructose 6-phosphate (Fru-6P) and ammonium ion, a regulatory reaction step in de novo uridine diphosphate-N-acetyl-alpha-D-glucosamine (UDP-GlcNAc) biosynthesis via hexosamine pathway. The chain is Glucosamine-6-phosphate deaminase (Gnpda1) from Aedes aegypti (Yellowfever mosquito).